A 275-amino-acid polypeptide reads, in one-letter code: uncharacterized protein (275 aa).

Glutamate 71, aspartate 85, isoleucine 87, and aspartate 88 together coordinate Mg(2+). Residue glutamate 71 coordinates substrate. 87 to 90 is a binding site for substrate; the sequence is IDGT. Helical transmembrane passes span 87 to 107, 112 to 132, and 178 to 198; these read IDGTANFLSGIPLWAVSIAFV, PVLGAVALPALDTLLWASVDG, and IVCLGSCAAALAMVAAGRLAG. Aspartate 208 serves as a coordination point for Mg(2+). Aspartate 208 serves as a coordination point for substrate.

Belongs to the inositol monophosphatase superfamily.

It is found in the cell membrane. This is an uncharacterized protein from Sinorhizobium fredii (strain NBRC 101917 / NGR234).